We begin with the raw amino-acid sequence, 346 residues long: GTPase Obg (346 aa).

One can recognise an Obg domain in the interval 1-159 (MRFVDEVTFV…RELRLELQLL (159 aa)). The disordered stretch occupies residues 128–148 (LHFKSSTNRAPRQSTEGTAGE). The segment covering 130 to 144 (FKSSTNRAPRQSTEG) has biased composition (polar residues). An OBG-type G domain is found at 160-335 (ADVGLLGMPN…LCGDIMNDLE (176 aa)). GTP contacts are provided by residues 166–173 (GMPNVGKS), 191–195 (FTTLY), 213–216 (DIPG), 285–288 (NRLD), and 316–318 (SGL). Mg(2+) contacts are provided by Ser173 and Thr193.

Belongs to the TRAFAC class OBG-HflX-like GTPase superfamily. OBG GTPase family. In terms of assembly, monomer. Requires Mg(2+) as cofactor.

Its subcellular location is the cytoplasm. In terms of biological role, an essential GTPase which binds GTP, GDP and possibly (p)ppGpp with moderate affinity, with high nucleotide exchange rates and a fairly low GTP hydrolysis rate. Plays a role in control of the cell cycle, stress response, ribosome biogenesis and in those bacteria that undergo differentiation, in morphogenesis control. The protein is GTPase Obg of Halorhodospira halophila (strain DSM 244 / SL1) (Ectothiorhodospira halophila (strain DSM 244 / SL1)).